The primary structure comprises 138 residues: uncharacterized protein (138 aa).

Disordered regions lie at residues 1 to 23 and 35 to 83; these read MPESAPSTPPSVNRRHEPEMLSE and ASPS…EDPV. Residues 60–69 show a composition bias toward acidic residues; sequence DEETIPEEDD.

This is an uncharacterized protein from Schizosaccharomyces pombe (strain 972 / ATCC 24843) (Fission yeast).